The sequence spans 363 residues: NAD(P)H-quinone oxidoreductase subunit 1, chloroplastic (363 aa).

Transmembrane regions (helical) follow at residues 26-46 (IIWV…GVLV), 98-118 (FSIG…VIPF), 127-147 (LSIG…GLLM), 253-273 (FGLF…FVTV), 300-320 (VFGT…FLFI), and 336-356 (LLNL…LLTT).

It belongs to the complex I subunit 1 family. In terms of assembly, NDH is composed of at least 16 different subunits, 5 of which are encoded in the nucleus.

It is found in the plastid. The protein resides in the chloroplast thylakoid membrane. The enzyme catalyses a plastoquinone + NADH + (n+1) H(+)(in) = a plastoquinol + NAD(+) + n H(+)(out). It carries out the reaction a plastoquinone + NADPH + (n+1) H(+)(in) = a plastoquinol + NADP(+) + n H(+)(out). NDH shuttles electrons from NAD(P)H:plastoquinone, via FMN and iron-sulfur (Fe-S) centers, to quinones in the photosynthetic chain and possibly in a chloroplast respiratory chain. The immediate electron acceptor for the enzyme in this species is believed to be plastoquinone. Couples the redox reaction to proton translocation, and thus conserves the redox energy in a proton gradient. In Helianthus annuus (Common sunflower), this protein is NAD(P)H-quinone oxidoreductase subunit 1, chloroplastic.